Reading from the N-terminus, the 242-residue chain is DNA repair protein RecO (242 aa).

It belongs to the RecO family. Monomer.

Involved in DNA repair and RecF pathway recombination. The protein is DNA repair protein RecO of Shigella dysenteriae serotype 1 (strain Sd197).